The chain runs to 190 residues: Ribose 1,5-bisphosphate phosphokinase PhnN (190 aa).

An ATP-binding site is contributed by 11–18 (GPSGSGKD).

Belongs to the ribose 1,5-bisphosphokinase family.

It catalyses the reaction alpha-D-ribose 1,5-bisphosphate + ATP = 5-phospho-alpha-D-ribose 1-diphosphate + ADP. It participates in metabolic intermediate biosynthesis; 5-phospho-alpha-D-ribose 1-diphosphate biosynthesis; 5-phospho-alpha-D-ribose 1-diphosphate from D-ribose 5-phosphate (route II): step 3/3. Its function is as follows. Catalyzes the phosphorylation of ribose 1,5-bisphosphate to 5-phospho-D-ribosyl alpha-1-diphosphate (PRPP). The protein is Ribose 1,5-bisphosphate phosphokinase PhnN of Thiobacillus denitrificans (strain ATCC 25259 / T1).